The following is a 214-amino-acid chain: Leucyl/phenylalanyl-tRNA--protein transferase (214 aa).

This sequence belongs to the L/F-transferase family.

It is found in the cytoplasm. It catalyses the reaction N-terminal L-lysyl-[protein] + L-leucyl-tRNA(Leu) = N-terminal L-leucyl-L-lysyl-[protein] + tRNA(Leu) + H(+). It carries out the reaction N-terminal L-arginyl-[protein] + L-leucyl-tRNA(Leu) = N-terminal L-leucyl-L-arginyl-[protein] + tRNA(Leu) + H(+). The catalysed reaction is L-phenylalanyl-tRNA(Phe) + an N-terminal L-alpha-aminoacyl-[protein] = an N-terminal L-phenylalanyl-L-alpha-aminoacyl-[protein] + tRNA(Phe). Functions in the N-end rule pathway of protein degradation where it conjugates Leu, Phe and, less efficiently, Met from aminoacyl-tRNAs to the N-termini of proteins containing an N-terminal arginine or lysine. The polypeptide is Leucyl/phenylalanyl-tRNA--protein transferase (Cereibacter sphaeroides (strain ATCC 17023 / DSM 158 / JCM 6121 / CCUG 31486 / LMG 2827 / NBRC 12203 / NCIMB 8253 / ATH 2.4.1.) (Rhodobacter sphaeroides)).